Here is a 249-residue protein sequence, read N- to C-terminus: MPIRNIAVGTPQEATHPDTLKAGLAEFISTFIFVFAGSGSGIAYNKLTNDGAATPAGLISASIAHAFALFVAVSVGANISGGHVNPAVFGAFVGGNITLLRGIVYIIAQLLGSIVCSALLVFVTASSVPAFGLSEGVGVGPALVLEIVMTFGLVYTVYATAVDPKKGNIGIIAPIAIGFIVGANILVGGAFTGASMNPAVSFGPAVVSWSWSNHWVYWAGPLIGGGIAGLVYEVLFINSTHEQLPTTDY.

2 helical membrane passes run 22 to 42 (AGLA…GSGI) and 56 to 76 (AGLI…VSVG). An NPA 1 motif is present at residues 85 to 87 (NPA). Transmembrane regions (helical) follow at residues 103 to 123 (IVYI…LVFV), 137 to 157 (VGVG…VYTV), and 169 to 189 (IGII…LVGG). An NPA 2 motif is present at residues 197-199 (NPA). Residues 217-237 (YWAGPLIGGGIAGLVYEVLFI) traverse the membrane as a helical segment.

This sequence belongs to the MIP/aquaporin (TC 1.A.8) family. TIP (TC 1.A.8.10) subfamily. Expression is highest in root tips, with slightly lower levels of hybridizing mRNA in stems, and whole roots, and much lower levels in nodules and leaves.

The protein localises to the membrane. Its function is as follows. Aquaporins facilitate the transport of water and small neutral solutes across cell membranes. This chain is Probable aquaporin TIP-type (MCP1), found in Medicago sativa (Alfalfa).